The following is a 158-amino-acid chain: Dysbindin domain-containing protein 1 (158 aa).

Disordered stretches follow at residues 1 to 50 (MEPP…VPAP) and 93 to 158 (ADSD…PQED). A phosphoserine mark is found at Ser95 and Ser119. A compositionally biased stretch (basic and acidic residues) spans 125 to 141 (TRAEQSHEKQPLGDPER).

This sequence belongs to the dysbindin family.

The chain is Dysbindin domain-containing protein 1 (DBNDD1) from Homo sapiens (Human).